Here is a 95-residue protein sequence, read N- to C-terminus: MKLVVIVLLVISVSILVSAQELGGSRRYCGRHLAQTMAVLCWGIDEMSAEKRNSDMVYEDSGMPELLPADTRKKRGIIDECCLQACTRDVLLSYC.

The first 19 residues, Met1–Ala19, serve as a signal peptide directing secretion. Cystine bridges form between Cys29/Cys82, Cys41/Cys95, and Cys81/Cys86. Residues Asn53 to Thr71 constitute a propeptide, c peptide like.

The protein belongs to the insulin family. As to quaternary structure, heterodimer of a B chain and an A chain linked by two disulfide bonds.

Its subcellular location is the secreted. The sequence is that of Bombyxin F-1 (BBXF1) from Bombyx mori (Silk moth).